The primary structure comprises 609 residues: Protein NRT1/ PTR FAMILY 7.1 (609 aa).

Helical transmembrane passes span 67–87 and 109–129; these read IILLVNQGLATLAFFGVGVNL and WTGTVYMFSLVGAFLSDSYWG. Thr133 is modified (phosphothreonine). 10 helical membrane-spanning segments follow: residues 136 to 156, 173 to 193, 216 to 236, 243 to 263, 367 to 387, 402 to 422, 438 to 458, 474 to 494, 516 to 536, and 559 to 579; these read IFQVIFVIGVGLLSFVSWFFL, SSLGVAIFYLSVYLVAFGYGG, FFSYFYFALNVGALFSNTILV, LWTEGFLVSLGSAIVALVAFL, PIWLCTIIYSVIFTQMASLFV, IPAASMSVFDIFSVFVSTGIY, MGIGLIIGIMAMVAAGLTEIQ, ILWQIPQYVLVGASEVFMYVG, MASMALGNYVSSLMVNIVMAI, and FYFLIAALAAIDFVVYLIFAK.

Belongs to the major facilitator superfamily. Proton-dependent oligopeptide transporter (POT/PTR) (TC 2.A.17) family. Expressed in flowers.

The protein resides in the membrane. In Arabidopsis thaliana (Mouse-ear cress), this protein is Protein NRT1/ PTR FAMILY 7.1 (NPF7.1).